The chain runs to 228 residues: tRNA (guanine-N(1)-)-methyltransferase (228 aa).

S-adenosyl-L-methionine is bound by residues glycine 111 and 130–135; that span reads IGDFVL.

This sequence belongs to the RNA methyltransferase TrmD family. In terms of assembly, homodimer.

It is found in the cytoplasm. The enzyme catalyses guanosine(37) in tRNA + S-adenosyl-L-methionine = N(1)-methylguanosine(37) in tRNA + S-adenosyl-L-homocysteine + H(+). In terms of biological role, specifically methylates guanosine-37 in various tRNAs. The polypeptide is tRNA (guanine-N(1)-)-methyltransferase (Ureaplasma urealyticum serovar 10 (strain ATCC 33699 / Western)).